Here is a 74-residue protein sequence, read N- to C-terminus: MLVFYALLFVTVFSNTVMGATIDKPIPKPILREAIEEIEVNKRADSHYCKEENCPPGKHCPEVPIACVYGPCCF.

Residues 1–19 (MLVFYALLFVTVFSNTVMG) form the signal peptide. The propeptide occupies 20 to 41 (ATIDKPIPKPILREAIEEIEVN).

Belongs to the scoloptoxin-07 family. Contains 3 disulfide bonds. As to expression, expressed by the venom gland.

The protein resides in the secreted. Functionally, inhibits voltage-gated potassium channels. This Scolopendra mutilans (Chinese red-headed centipede) protein is Kappa-scoloptoxin(07)-Ssm2d.